A 183-amino-acid chain; its full sequence is MSTTIQNISLSGRKKQVSNKEMTFLESLYLVAIVKGLLITIKHFFRKKVTIHYPEQVREMSPVYRGQHMLKRDEQGRENCTACGLCALSCPAEAITMKAAERKSNEKHLYREEKYAEIYEINMLRCIFCGLCEEACPKDAIYLTTSKVLVPSNYERENFIFGKDKLVMPLDIAMQNAQLKNAN.

4Fe-4S ferredoxin-type domains follow at residues 71 to 100 (KRDEQGRENCTACGLCALSCPAEAITMKAA) and 117 to 146 (EIYEINMLRCIFCGLCEEACPKDAIYLTTS). [4Fe-4S] cluster-binding residues include Cys-80, Cys-83, Cys-86, Cys-90, Cys-126, Cys-129, Cys-132, and Cys-136.

This sequence belongs to the complex I 23 kDa subunit family. In terms of assembly, NDH-1 is composed of 14 different subunits. Subunits NuoA, H, J, K, L, M, N constitute the membrane sector of the complex. It depends on [4Fe-4S] cluster as a cofactor.

It localises to the cell inner membrane. It carries out the reaction a quinone + NADH + 5 H(+)(in) = a quinol + NAD(+) + 4 H(+)(out). In terms of biological role, NDH-1 shuttles electrons from NADH, via FMN and iron-sulfur (Fe-S) centers, to quinones in the respiratory chain. The immediate electron acceptor for the enzyme in this species is believed to be ubiquinone. Couples the redox reaction to proton translocation (for every two electrons transferred, four hydrogen ions are translocated across the cytoplasmic membrane), and thus conserves the redox energy in a proton gradient. This chain is NADH-quinone oxidoreductase subunit I, found in Flavobacterium psychrophilum (strain ATCC 49511 / DSM 21280 / CIP 103535 / JIP02/86).